The sequence spans 727 residues: Prolyl endopeptidase-like (727 aa).

Active-site charge relay system residues include Ser-559, Asp-645, and His-690.

The protein belongs to the peptidase S9A family. Homodimer. Interacts with the AP-1 complex.

The protein localises to the cytoplasm. Its subcellular location is the cytosol. It is found in the golgi apparatus. The protein resides in the trans-Golgi network. It localises to the cytoskeleton. The protein localises to the nucleus. Functionally, serine peptidase whose precise substrate specificity remains unclear. Does not cleave peptides after a arginine or lysine residue. Regulates trans-Golgi network morphology and sorting by regulating the membrane binding of the AP-1 complex. May play a role in the regulation of synaptic vesicle exocytosis. The chain is Prolyl endopeptidase-like (PREPL) from Pongo abelii (Sumatran orangutan).